The following is a 452-amino-acid chain: Neuromedin-K receptor (452 aa).

The Extracellular segment spans residues 1–71 (MASVPTGENW…TNQFVQPSWR (71 aa)). Residues N9, N23, N40, and N60 are each glycosylated (N-linked (GlcNAc...) asparagine). A helical transmembrane segment spans residues 72 to 94 (IALWSLAYGLVVAVAVFGNLIVI). At 95–104 (WIILAHKRMR) the chain is on the cytoplasmic side. Residues 105–126 (TVTNYFLVNLAFSDASVAAFNT) traverse the membrane as a helical segment. Topologically, residues 127–146 (LVNFIYGVHSEWYFGANYCR) are extracellular. The cysteines at positions 145 and 220 are disulfide-linked. Residues 147 to 168 (FQNFFPITAVFASIYSMTAIAV) traverse the membrane as a helical segment. The Cytoplasmic portion of the chain corresponds to 169-188 (DRYMAIIDPLKPRLSATATK). A helical transmembrane segment spans residues 189-209 (IVIGSIWILAFLLAFPQCLYS). The Extracellular portion of the chain corresponds to 210–232 (KIKVMPGRTLCYVQWPEGPKQHF). A helical transmembrane segment spans residues 233 to 257 (TYHIIVIILVYCFPLLIMGVTYTIV). Over 258-286 (GITLWGGEIPGDTCDKYHEQLKAKRKVVK) the chain is Cytoplasmic. The helical transmembrane segment at 287–308 (MMIIVVVTFAICWLPYHVYFIL) threads the bilayer. Residues 309 to 321 (TAIYQQLNRWKYI) are Extracellular-facing. Residues 322–346 (QQVYLASFWLAMSSTMYNPIIYCCL) traverse the membrane as a helical segment. At 347-452 (NKRFRAGFKR…SPYTSVDEYS (106 aa)) the chain is on the cytoplasmic side. Residue C361 is the site of S-palmitoyl cysteine attachment. The disordered stretch occupies residues 401–452 (DPSEGDPAKSSRKKRAVPRDPSANGCSHREFKSASTTSSFISSPYTSVDEYS). Positions 433–452 (SASTTSSFISSPYTSVDEYS) are enriched in low complexity.

It belongs to the G-protein coupled receptor 1 family. In terms of processing, the anchoring of this receptor to the plasma membrane is probably mediated by the palmitoylation of a cysteine residue.

It localises to the cell membrane. Its function is as follows. This is a receptor for the tachykinin neuropeptide neuromedin-K (neurokinin B). It is associated with G proteins that activate a phosphatidylinositol-calcium second messenger system. The sequence is that of Neuromedin-K receptor (Tacr3) from Mus musculus (Mouse).